The chain runs to 126 residues: Small ribosomal subunit protein uS13 (126 aa).

Residues 95–126 (NLPVHGQRTHTNARTRKGPRRAIAGKKKAGKK) are disordered.

Belongs to the universal ribosomal protein uS13 family. As to quaternary structure, part of the 30S ribosomal subunit. Forms a loose heterodimer with protein S19. Forms two bridges to the 50S subunit in the 70S ribosome.

Functionally, located at the top of the head of the 30S subunit, it contacts several helices of the 16S rRNA. In the 70S ribosome it contacts the 23S rRNA (bridge B1a) and protein L5 of the 50S subunit (bridge B1b), connecting the 2 subunits; these bridges are implicated in subunit movement. Contacts the tRNAs in the A and P-sites. The protein is Small ribosomal subunit protein uS13 of Frankia casuarinae (strain DSM 45818 / CECT 9043 / HFP020203 / CcI3).